Reading from the N-terminus, the 466-residue chain is Vimentin (466 aa).

Composition is skewed to low complexity over residues 1-13 (MSTR…SYRR) and 20-31 (TASRPSSSRSYV). The disordered stretch occupies residues 1–31 (MSTRTVSSSSYRRMFGGPGTASRPSSSRSYV). At Ser2 the chain carries N-acetylserine. The interval 2 to 95 (STRTVSSSSY…FSLADAINTE (94 aa)) is head. At Ser7 the chain carries Phosphoserine; alternate. A glycan (O-linked (GlcNAc) serine; alternate) is linked at Ser7. A phosphoserine mark is found at Ser8, Ser9, and Ser10. Thr20 is modified (phosphothreonine). Phosphoserine is present on residues Ser25 and Ser26. O-linked (GlcNAc) threonine glycosylation is present at Thr33. O-linked (GlcNAc) serine; alternate glycosylation is present at Ser34. Residue Ser34 is modified to Phosphoserine; by PKC; alternate. At Ser39 the chain carries Phosphoserine; by CaMK2, PKA, PKC and ROCK2. 4 positions are modified to phosphoserine: Ser42, Ser47, Ser49, and Ser51. Tyr53 is subject to Phosphotyrosine. Ser55 bears the Phosphoserine mark. Position 56 is a phosphoserine; by CDK5 and CDK1 (Ser56). Tyr61 bears the Phosphotyrosine mark. At Ser66 the chain carries Phosphoserine. Ser72 carries the phosphoserine; by AURKB and ROCK2 modification. Ser73 and Ser87 each carry phosphoserine. The tract at residues 96 to 131 (FKNTRTNEKVELQELNDRFANYIDKVRFLEQQNKIL) is coil 1A. Positions 96 to 131 (FKNTRTNEKVELQELNDRFANYIDKVRFLEQQNKIL) form a coiled coil. Residues 103 to 411 (EKVELQELND…KLLEGEESRI (309 aa)) enclose the IF rod domain. Lys104 participates in a covalent cross-link: Glycyl lysine isopeptide (Lys-Gly) (interchain with G-Cter in SUMO2). Tyr117 bears the Phosphotyrosine mark. An N6-acetyllysine; alternate mark is found at Lys120, Lys129, and Lys139. Lys120 and Lys129 each carry N6-succinyllysine; alternate. Glycyl lysine isopeptide (Lys-Gly) (interchain with G-Cter in SUMO2); alternate cross-links involve residues Lys120, Lys129, and Lys139. A linker 1 region spans residues 132-153 (LAELEQLKGQGKSRLGDLYEEE). Position 144 is a phosphoserine (Ser144). Positions 154 to 245 (MRELRRQVDQ…KLHDEEIQEL (92 aa)) form a coiled coil. The interval 154 to 245 (MRELRRQVDQ…KLHDEEIQEL (92 aa)) is coil 1B. Lys168 carries the N6-acetyllysine modification. Residue Lys188 is modified to N6-acetyllysine; alternate. Lys188 carries the N6-succinyllysine; alternate modification. Position 214 is a phosphoserine (Ser214). Lys223 is modified (N6-acetyllysine; alternate). Lys223 is covalently cross-linked (Glycyl lysine isopeptide (Lys-Gly) (interchain with G-Cter in SUMO2); alternate). Ser226 is modified (phosphoserine). Position 235 is an N6-acetyllysine (Lys235). Residues 246-268 (QAQIQEQHVQIDMDVSKPDLTAA) form a linker 12 region. Residue Lys262 forms a Glycyl lysine isopeptide (Lys-Gly) (interchain with G-Cter in SUMO2) linkage. A coil 2 region spans residues 269–407 (LRDVRQQYES…ATYRKLLEGE (139 aa)). Position 294 is an N6-acetyllysine; alternate (Lys294). Lys294 carries the N6-succinyllysine; alternate modification. Residue Lys294 forms a Glycyl lysine isopeptide (Lys-Gly) (interchain with G-Cter in SUMO2); alternate linkage. The residue at position 299 (Ser299) is a Phosphoserine. Positions 303 to 407 (NRNNDALRQA…ATYRKLLEGE (105 aa)) form a coiled coil. Lys313 is covalently cross-linked (Glycyl lysine isopeptide (Lys-Gly) (interchain with G-Cter in SUMO2)). Ser325 bears the Phosphoserine mark. The [IL]-x-C-x-x-[DE] motif motif lies at 326–329 (LTCE). At Lys373 the chain carries N6-acetyllysine; alternate. A Glycyl lysine isopeptide (Lys-Gly) (interchain with G-Cter in SUMO2); alternate cross-link involves residue Lys373. The tail stretch occupies residues 408–466 (ESRISLPLPNFSSLNLRETNLESLPLVDTHSKRTLLIKTVETRDGQVINETSQHHDDLE). 4 positions are modified to phosphoserine: Ser409, Ser412, Ser419, and Ser420. Position 426 is a phosphothreonine (Thr426). Ser430 carries the post-translational modification Phosphoserine. Position 436 is a phosphothreonine (Thr436). A Phosphoserine modification is found at Ser438. Lys439 is covalently cross-linked (Glycyl lysine isopeptide (Lys-Gly) (interchain with G-Cter in SUMO2)). Lys445 carries the N6-acetyllysine; alternate modification. The residue at position 445 (Lys445) is an N6-succinyllysine; alternate. Lys445 participates in a covalent cross-link: Glycyl lysine isopeptide (Lys-Gly) (interchain with G-Cter in SUMO2); alternate. Residue Lys445 forms a Glycyl lysine isopeptide (Lys-Gly) (interchain with G-Cter in SUMO1); alternate linkage. Thr446 and Thr458 each carry phosphothreonine. Ser459 is modified (phosphoserine).

It belongs to the intermediate filament family. As to quaternary structure, homomer assembled from elementary dimers. Identified in complexes that contain VIM, EZR, AHNAK, BFSP1, BFSP2, ANK2, PLEC, PRX and spectrin. Interacts with BCAS3. Interacts with LGSN. Interacts with SYNM. Interacts (via rod region) with PLEC (via CH 1 domain). Interacts with STK33. Interacts with LARP6. Interacts with RAB8B. Interacts with TOR1A; the interaction associates TOR1A with the cytoskeleton. Interacts with TOR1AIP1. Interacts with TOR1AIP1. Interacts with DIAPH1. Interacts with EPPK1; interaction is dependent of higher-order structure of intermediate filament. Interacts with the non-receptor tyrosine kinase SRMS; the interaction leads to phosphorylation of VIM. Interacts with NOD2. Interacts (via head region) with CORO1C. Interacts with HDGF. Interacts with PRKCE (via phorbol-ester/DAG-type 2 domain). Interacts with BFSP2. Interacts with PPL. Interacts with PKP1 and PKP2. Interacts with SCRIB (via PDZ domains); the interaction protects SCRIB from proteasomal degradation and facilitates SCRIB localization to intermediate filaments, the interaction is reduced by cell contact inhibition. Post-translationally, one of the most prominent phosphoproteins in various cells of mesenchymal origin. Phosphorylation is enhanced during cell division, at which time vimentin filaments are significantly reorganized. Phosphorylation by PKN1 inhibits the formation of filaments. Filament disassembly during mitosis is promoted by phosphorylation at Ser-55 as well as by nestin. Phosphorylated at Ser-56 by CDK5 during neutrophil secretion in the cytoplasm. Phosphorylated by STK33. Phosphorylated on tyrosine residues by SRMS. S-nitrosylation is induced by interferon-gamma and oxidatively-modified low-densitity lipoprotein (LDL(ox)) possibly implicating the iNOS-S100A8/9 transnitrosylase complex.

The protein localises to the cytoplasm. It is found in the cytoskeleton. The protein resides in the nucleus matrix. It localises to the cell membrane. Functionally, vimentins are class-III intermediate filaments found in various non-epithelial cells, especially mesenchymal cells. Vimentin is attached to the nucleus, endoplasmic reticulum, and mitochondria, either laterally or terminally. Plays a role in cell directional movement, orientation, cell sheet organization and Golgi complex polarization at the cell migration front. Protects SCRIB from proteasomal degradation and facilitates its localization to intermediate filaments in a cell contact-mediated manner. Involved with LARP6 in the stabilization of type I collagen mRNAs for CO1A1 and CO1A2. The polypeptide is Vimentin (VIM) (Sus scrofa (Pig)).